Consider the following 368-residue polypeptide: Probable dual-specificity RNA methyltransferase RlmN (368 aa).

The active-site Proton acceptor is Glu-100. A Radical SAM core domain is found at 106 to 344 (QHYGLSVCVT…CVVRQEHGTD (239 aa)). Cys-113 and Cys-349 are joined by a disulfide. Residues Cys-120, Cys-124, and Cys-127 each coordinate [4Fe-4S] cluster. S-adenosyl-L-methionine-binding positions include 172–173 (GE), Ser-204, 227–229 (SLH), and Asn-305. The active-site S-methylcysteine intermediate is the Cys-349.

Belongs to the radical SAM superfamily. RlmN family. [4Fe-4S] cluster serves as cofactor.

It localises to the cytoplasm. The enzyme catalyses adenosine(2503) in 23S rRNA + 2 reduced [2Fe-2S]-[ferredoxin] + 2 S-adenosyl-L-methionine = 2-methyladenosine(2503) in 23S rRNA + 5'-deoxyadenosine + L-methionine + 2 oxidized [2Fe-2S]-[ferredoxin] + S-adenosyl-L-homocysteine. It carries out the reaction adenosine(37) in tRNA + 2 reduced [2Fe-2S]-[ferredoxin] + 2 S-adenosyl-L-methionine = 2-methyladenosine(37) in tRNA + 5'-deoxyadenosine + L-methionine + 2 oxidized [2Fe-2S]-[ferredoxin] + S-adenosyl-L-homocysteine. Functionally, specifically methylates position 2 of adenine 2503 in 23S rRNA and position 2 of adenine 37 in tRNAs. The sequence is that of Probable dual-specificity RNA methyltransferase RlmN from Streptococcus agalactiae serotype V (strain ATCC BAA-611 / 2603 V/R).